A 341-amino-acid polypeptide reads, in one-letter code: Holliday junction branch migration complex subunit RuvB (341 aa).

The tract at residues 1–22 (MSETAGKGVTMPEIMQSSYPDE) is disordered. A large ATPase domain (RuvB-L) region spans residues 4–193 (TAGKGVTMPE…FGIISRLEFY (190 aa)). Residues Ile-32, Arg-33, Gly-74, Lys-77, Thr-78, Thr-79, 140 to 142 (EDY), Arg-183, Tyr-193, and Arg-230 each bind ATP. A Mg(2+)-binding site is contributed by Thr-78. Residues 194-264 (TPEELSQIIL…LVNHALQKLD (71 aa)) form a small ATPAse domain (RuvB-S) region. Residues 267–341 (EKGLDQMDRK…KAYKHLNLTD (75 aa)) form a head domain (RuvB-H) region. Arg-322 and Arg-327 together coordinate DNA.

Belongs to the RuvB family. Homohexamer. Forms an RuvA(8)-RuvB(12)-Holliday junction (HJ) complex. HJ DNA is sandwiched between 2 RuvA tetramers; dsDNA enters through RuvA and exits via RuvB. An RuvB hexamer assembles on each DNA strand where it exits the tetramer. Each RuvB hexamer is contacted by two RuvA subunits (via domain III) on 2 adjacent RuvB subunits; this complex drives branch migration. In the full resolvosome a probable DNA-RuvA(4)-RuvB(12)-RuvC(2) complex forms which resolves the HJ.

Its subcellular location is the cytoplasm. The enzyme catalyses ATP + H2O = ADP + phosphate + H(+). Its function is as follows. The RuvA-RuvB-RuvC complex processes Holliday junction (HJ) DNA during genetic recombination and DNA repair, while the RuvA-RuvB complex plays an important role in the rescue of blocked DNA replication forks via replication fork reversal (RFR). RuvA specifically binds to HJ cruciform DNA, conferring on it an open structure. The RuvB hexamer acts as an ATP-dependent pump, pulling dsDNA into and through the RuvAB complex. RuvB forms 2 homohexamers on either side of HJ DNA bound by 1 or 2 RuvA tetramers; 4 subunits per hexamer contact DNA at a time. Coordinated motions by a converter formed by DNA-disengaged RuvB subunits stimulates ATP hydrolysis and nucleotide exchange. Immobilization of the converter enables RuvB to convert the ATP-contained energy into a lever motion, pulling 2 nucleotides of DNA out of the RuvA tetramer per ATP hydrolyzed, thus driving DNA branch migration. The RuvB motors rotate together with the DNA substrate, which together with the progressing nucleotide cycle form the mechanistic basis for DNA recombination by continuous HJ branch migration. Branch migration allows RuvC to scan DNA until it finds its consensus sequence, where it cleaves and resolves cruciform DNA. The polypeptide is Holliday junction branch migration complex subunit RuvB (Lawsonia intracellularis (strain PHE/MN1-00)).